A 563-amino-acid polypeptide reads, in one-letter code: MLEEAGEVLENMLKASCLPLGFIVFLPAVLLLVAPPLPAADAAHEFTVYRMQQYDLQGQPYGTRNAVLNTEARTIDADVLSRRCVLMRLLDFSYEQYQKALRQSAGAVVIILPRAMAAVPQDVIRQFMETEPEMLAMETVVPVYFAVEDEALLSIYEQTQAASAAQGSASAAEVLLHTATANGFQMVTSGVQSKAVSDWLITSVEGRLTGLGGEDLPTIVIVAHYDAFGVAPWLSHGADSNGSGISVLLELARLFSRLYTYKRTHAAYNLLFFASGGGKFNYQGTKRWLEDNLDHTDSSLLQDNVAFVLCLDTVGRGDSLHLHVSKPPREGTLQHAFLRELEAVAAHQFPEVRFSMVHKKINLAEDILAWEHERFAIRRLPAFTLSHLESHRDGQRSSIMDVRSRVDSKTLTRNTRLIAEALTRVIYNLTEKGTPPDMPVFTEQMQIQQEQLDSVMDWLTNQPRAAQLVDKDGTLLSTLEHYLSRYLKEVKQHHIKADKRDPEFVFYDQLKQVMNAYRVKPAIFDLLLAVCIGAYLGMAYTAVQHFDLLYKTVQRLLVKAKTQ.

Residues 1–42 (MLEEAGEVLENMLKASCLPLGFIVFLPAVLLLVAPPLPAADA) form the signal peptide. The Lumenal segment spans residues 43 to 522 (AHEFTVYRMQ…VMNAYRVKPA (480 aa)). N-linked (GlcNAc...) asparagine glycosylation is found at Asn-241 and Asn-428. The helical transmembrane segment at 523–543 (IFDLLLAVCIGAYLGMAYTAV) threads the bilayer. Over 544–563 (QHFDLLYKTVQRLLVKAKTQ) the chain is Cytoplasmic.

The protein belongs to the nicastrin family. As to quaternary structure, component of the back of Sec61 (BOS) complex, composed of NCLN/Nicalin, NOMO1 and TMEM147. The BOS complex is part of the multi-pass translocon (MPT) complex, composed of three subcomplexes, the GEL complex (composed of RAB5IF/OPTI and TMCO1), the BOS complex (composed of NCLN/Nicalin, NOMO1 and TMEM147) and the PAT complex (composed of WDR83OS/Asterix and CCDC47). The MPT complex associates with the SEC61 complex.

It is found in the endoplasmic reticulum membrane. Its function is as follows. Component of the multi-pass translocon (MPT) complex that mediates insertion of multi-pass membrane proteins into the lipid bilayer of membranes. The MPT complex takes over after the SEC61 complex: following membrane insertion of the first few transmembrane segments of proteins by the SEC61 complex, the MPT complex occludes the lateral gate of the SEC61 complex to promote insertion of subsequent transmembrane regions. May antagonize Nodal signaling and subsequent organization of axial structures during mesodermal patterning, via its interaction with NOMO. The chain is BOS complex subunit NCLN from Canis lupus familiaris (Dog).